The chain runs to 955 residues: MSRFFAGGSDSDSDSSSDSEPVIRQQVAQFTFSDEEEDVKRVVRSKKEKRYEDLSNIIKSIRNHKKIKDMSSVLTSFEEFMRAYTKALPVVMKEENGVTPRIVVRALAELEDFVNESWDDKESRKNLSKNNNKALGTLRQKFRKYIKDFESDMKRFRAAPEDFAEEEEDDEREDEKGSDEEEEKVVVQVEPKAVSFKKEPEKAKPVKPVADSDSSDWGSDSDSDSTSSDEDAKYTSIRDRFLKKPEKGTEEIASAPSGVSGDDAFKKEKKKKTGEALSKKKKPKQDEMFDENEEEEEGWKVVNGTRSGASEQPKMFAKDAEIDTKLVVNKLNEVMAARGKKRTDRKMQIEFLRELRTVAETNNLGPAVAVKIRFNIVSAIFDYNPKVSGAMKLEHWSKLLEEIQELLKLLLAHEDVHLSESILDEYEEYDTAPFKIRGCMLTAVERLDDEFTKLLKECDPHSNEYVDRLKDEVPVTNIIEQVVTYVERLGNEMEICRIYLRKIDHLYYKFDPDVLKKRKGQLPANTITSVEEMDKLCRYIYAKDQTDRLRTRAILSHIFHHALHDNWFQARDLVLMSHLQETIHHSDPATQILYNRMMANLGLCAFRHGNIKDAHLCLVDLMMTGKPKELLAQGLVPQRQHERSLEQEKIEKQRQMPFHMHINLELLECVYLVSAMLLEIPYMAAHEFDARRRMISKTFYQQLRSSERQSLVGPPESMREHVVAAAKAMRHGDWNACANFIVNKKMNVKVWDLFYEANRVREMMIKFIKEESLRTYLFTYSNVFASISVPHLADMFKLPKSKVHSLISKMIINEELMASLDDPTETIVMHRSEPSRLQALSMQLADKVTNLVDANERIFEMKQGNFFQRGGNQGYNRDRQNYRNQNQNQNWNNNRRQDNRNRGNRGNQNRGEGREQREHHRDHHRDQREHREHQNREFREQREQMRNVEYQNKAE.

Disordered regions lie at residues 1 to 22 (MSRF…SEPV) and 157 to 299 (RAAP…EEGW). Acidic residues predominate over residues 162–183 (DFAEEEEDDEREDEKGSDEEEE). Residues 206–218 (VKPVADSDSSDWG) are compositionally biased toward low complexity. Acidic residues predominate over residues 219 to 229 (SDSDSDSTSSD). A compositionally biased stretch (basic and acidic residues) spans 230–250 (EDAKYTSIRDRFLKKPEKGTE). Acidic residues predominate over residues 288–297 (MFDENEEEEE). Residues 658 to 834 (FHMHINLELL…ETIVMHRSEP (177 aa)) enclose the PCI domain. Residues 865–955 (NFFQRGGNQG…RNVEYQNKAE (91 aa)) are disordered. A compositionally biased stretch (low complexity) spans 882–894 (YRNQNQNQNWNNN). Basic and acidic residues predominate over residues 911–955 (GEGREQREHHRDHHRDQREHREHQNREFREQREQMRNVEYQNKAE).

It belongs to the eIF-3 subunit C family. As to quaternary structure, component of the eukaryotic translation initiation factor 3 (eIF-3) complex.

Its subcellular location is the cytoplasm. Functionally, component of the eukaryotic translation initiation factor 3 (eIF-3) complex, which is involved in protein synthesis of a specialized repertoire of mRNAs and, together with other initiation factors, stimulates binding of mRNA and methionyl-tRNAi to the 40S ribosome. The eIF-3 complex specifically targets and initiates translation of a subset of mRNAs involved in cell proliferation. The polypeptide is Eukaryotic translation initiation factor 3 subunit C (Anopheles gambiae (African malaria mosquito)).